Consider the following 82-residue polypeptide: Small ribosomal subunit protein bS20 (82 aa).

The segment covering 1 to 11 (MANHKSALKRI) has biased composition (basic residues). A disordered region spans residues 1 to 20 (MANHKSALKRIRSNETKRLR).

This sequence belongs to the bacterial ribosomal protein bS20 family.

Binds directly to 16S ribosomal RNA. The protein is Small ribosomal subunit protein bS20 of Christiangramia forsetii (strain DSM 17595 / CGMCC 1.15422 / KT0803) (Gramella forsetii).